We begin with the raw amino-acid sequence, 385 residues long: Cytochrome b (385 aa).

4 consecutive transmembrane segments (helical) span residues 32–52, 76–98, 113–133, and 179–199; these read LGSL…FMAM, WLLR…MHIA, VWIV…LGYC, and FFAL…MHFM. The heme b site is built by His82 and His96. Heme b is bound by residues His183 and His197. His202 contacts a ubiquinone. 4 helical membrane-spanning segments follow: residues 225–245, 289–309, 321–341, and 348–368; these read FIFK…LFVF, LLGV…PITD, LSKF…QIGQ, and FVLM…IIVP.

It belongs to the cytochrome b family. In terms of assembly, fungal cytochrome b-c1 complex contains 10 subunits; 3 respiratory subunits, 2 core proteins and 5 low-molecular weight proteins. Cytochrome b-c1 complex is a homodimer. The cofactor is heme b.

It is found in the mitochondrion inner membrane. Component of the ubiquinol-cytochrome c reductase complex (complex III or cytochrome b-c1 complex) that is part of the mitochondrial respiratory chain. The b-c1 complex mediates electron transfer from ubiquinol to cytochrome c. Contributes to the generation of a proton gradient across the mitochondrial membrane that is then used for ATP synthesis. The chain is Cytochrome b (COB) from Candida glabrata (strain ATCC 2001 / BCRC 20586 / JCM 3761 / NBRC 0622 / NRRL Y-65 / CBS 138) (Yeast).